The chain runs to 330 residues: Cathepsin K (330 aa).

The first 16 residues, 1 to 16 (MWGLEVLLLLPMASFA), serve as a signal peptide directing secretion. Residues 17–115 (LYPEEILDTQ…TLYIPDWESR (99 aa)) constitute a propeptide, activation peptide. An N-linked (GlcNAc...) asparagine glycan is attached at asparagine 104. 3 disulfides stabilise this stretch: cysteine 137–cysteine 178, cysteine 171–cysteine 211, and cysteine 270–cysteine 319. Cysteine 140 is a catalytic residue. Active-site residues include histidine 277 and asparagine 297.

It belongs to the peptidase C1 family.

The protein localises to the lysosome. The protein resides in the secreted. Its subcellular location is the apical cell membrane. It catalyses the reaction Broad proteolytic activity. With small-molecule substrates and inhibitors, the major determinant of specificity is P2, which is preferably Leu, Met &gt; Phe, and not Arg.. Its function is as follows. Thiol protease involved in osteoclastic bone resorption and may participate partially in the disorder of bone remodeling. Displays potent endoprotease activity against fibrinogen at acid pH. May play an important role in extracellular matrix degradation. Involved in the release of thyroid hormone thyroxine (T4) by limited proteolysis of TG/thyroglobulin in the thyroid follicle lumen. The sequence is that of Cathepsin K (CTSK) from Canis lupus familiaris (Dog).